A 756-amino-acid polypeptide reads, in one-letter code: MTPQAFTATVVGSPRIGPKRELKRATEGYWAGRTGRAELEKVAATLRRDTWAGLAAAGLDSVPVNTFSYYDQMLDTAVMLDALPERARQVSDDLDRYFAAARGNSDVAPLEMTKWFDTNYHYIVPEIAPTTKFALNPDKVLSELKEALAQGIPARPVVIGPITFLLLSKGVDGAGAPIERLEELVPIYAELLSLLADNGAQWVQLDEPALVTDMCADAPALAEAVYNKLGSASNRPAIYVATYFGDPGASLAGLARTPVEAIGVDLVYGPDTAVAAVPELAGKTVVAGVVDGRNVWRTDLAAALDKLTTLLGSAARVAVSTSCSTLHVPYSLEPETDLDDALRSWLAFGREKVAEVVTLARALRDGREAVADEIAASNAAVASRKSDPRLHNDRVRARIDSIVASGSHRGDPAQRRASQDARLHLPPLPTTTIGSYPQTSAIRKARAALRSGEIDQAEYERRMKKEIADVITLQEQLGLDVLVHGEPERNDMVQYFAEQLEGFFATQNGWVQSYGSRCVRPPILYGDVVRTHPMTVEWISYAQSLTDKPVKGMLTGPVTILAWSFVRDDQPLADTANQVALAIRDETVDLQAAGIAVIQVDEPALRELLPLRRADQDEYLRWAVGAFRLATSGVADSTQIHTHLCYSEFGEVIGAIADLDADVTSLEAARSHMEVLDDLNAVGFSNSVGPGVYDIHSPRVPSTAEIAESLRAALRAVPAERLWVNPDCGLKTRNPDEVSASLKNMVAAAHEVRAGV.

Residues 20-23 (RELK) and Lys-114 contribute to the 5-methyltetrahydropteroyltri-L-glutamate site. L-homocysteine contacts are provided by residues 433-435 (IGS) and Glu-486. L-methionine is bound by residues 433–435 (IGS) and Glu-486. 5-methyltetrahydropteroyltri-L-glutamate is bound by residues 517 to 518 (RC) and Trp-563. L-homocysteine is bound at residue Asp-601. Asp-601 serves as a coordination point for L-methionine. Glu-607 is a 5-methyltetrahydropteroyltri-L-glutamate binding site. Residues His-643, Cys-645, and Glu-667 each contribute to the Zn(2+) site. The active-site Proton donor is His-696. Cys-728 is a binding site for Zn(2+).

Belongs to the vitamin-B12 independent methionine synthase family. It depends on Zn(2+) as a cofactor.

The catalysed reaction is 5-methyltetrahydropteroyltri-L-glutamate + L-homocysteine = tetrahydropteroyltri-L-glutamate + L-methionine. Its pathway is amino-acid biosynthesis; L-methionine biosynthesis via de novo pathway; L-methionine from L-homocysteine (MetE route): step 1/1. In terms of biological role, catalyzes the transfer of a methyl group from 5-methyltetrahydrofolate to homocysteine resulting in methionine formation. This Mycolicibacterium paratuberculosis (strain ATCC BAA-968 / K-10) (Mycobacterium paratuberculosis) protein is 5-methyltetrahydropteroyltriglutamate--homocysteine methyltransferase.